Here is a 402-residue protein sequence, read N- to C-terminus: MAVCTVYTIPTTTHLGSSFNQNNKQVFFNYKRSSSSNNTLFTTRPSYVITCSQQQTIVIGLAADSGCGKSTFMRRLTSVFGGAAEPPKGGNPDSNTLISDTTTVICLDDFHSLDRNGRKVEKVTALDPKANDFDLMYEQVKALKEGKAVDKPIYNHVSGLLDPPELIQPPKILVIEGLHPMYDARVRELLDFSIYLDISNEVKFAWKIQRDMKERGHSLESIKASIESRKPDFDAYIDPQKQHADVVIEVLPTELIPDDDEGKVLRVRMIQKEGVKFFNPVYLFDEGSTISWIPCGRKLTCSYPGIKFSYGPDTFYGNEVTVVEMDGMFDRLDELIYVESHLSNLSTKFYGEVTQQMLKHQNFPGSNNGTGFFQTIIGLKIRDLFEQLVASRSTATATAAKA.

A chloroplast-targeting transit peptide spans 1–51 (MAVCTVYTIPTTTHLGSSFNQNNKQVFFNYKRSSSSNNTLFTTRPSYVITC). Cysteine 67 and cysteine 106 are oxidised to a cystine.

Belongs to the phosphoribulokinase family.

The protein localises to the plastid. Its subcellular location is the chloroplast. The enzyme catalyses D-ribulose 5-phosphate + ATP = D-ribulose 1,5-bisphosphate + ADP + H(+). The protein operates within carbohydrate biosynthesis; Calvin cycle. Its activity is regulated as follows. Light regulated via thioredoxin by reversible oxidation/reduction of sulfhydryl/disulfide groups. The sequence is that of Phosphoribulokinase, chloroplastic from Spinacia oleracea (Spinach).